A 118-amino-acid chain; its full sequence is Large ribosomal subunit protein bL20 (118 aa).

This sequence belongs to the bacterial ribosomal protein bL20 family.

In terms of biological role, binds directly to 23S ribosomal RNA and is necessary for the in vitro assembly process of the 50S ribosomal subunit. It is not involved in the protein synthesizing functions of that subunit. This chain is Large ribosomal subunit protein bL20, found in Lactobacillus acidophilus (strain ATCC 700396 / NCK56 / N2 / NCFM).